A 479-amino-acid chain; its full sequence is GTPase Obg (479 aa).

The Obg domain occupies 2–159; it reads PRFVDRVVIH…RDLTLELKTV (158 aa). An OBG-type G domain is found at 160–340; the sequence is ADVGLVGFPS…LIFGLSQMIS (181 aa). GTP-binding positions include 166–173, 191–195, 212–215, 292–295, and 321–323; these read GFPSAGKS, FTTLV, DVPG, NKID, and STA. Residues S173 and T193 each coordinate Mg(2+). An OCT domain is found at 358-436; the sequence is PIPVDDSGFT…IGEMTFDWEP (79 aa). A disordered region spans residues 434 to 479; it reads WEPQTPAGEPVAMSGRGTDPRLDSNKRVGAAERKAARSRRREHGDG. A compositionally biased stretch (basic and acidic residues) spans 451–468; that stretch reads TDPRLDSNKRVGAAERKA. Positions 469-479 are enriched in basic residues; it reads ARSRRREHGDG.

Belongs to the TRAFAC class OBG-HflX-like GTPase superfamily. OBG GTPase family. Monomer. Mg(2+) is required as a cofactor.

Its subcellular location is the cytoplasm. An essential GTPase which binds GTP, GDP and possibly (p)ppGpp with moderate affinity, with high nucleotide exchange rates and a fairly low GTP hydrolysis rate. Plays a role in control of the cell cycle, stress response, ribosome biogenesis and in those bacteria that undergo differentiation, in morphogenesis control. This chain is GTPase Obg, found in Mycobacterium tuberculosis (strain ATCC 25177 / H37Ra).